The chain runs to 208 residues: Protein GrpE (208 aa).

Over residues 1 to 12 the composition is skewed to basic and acidic residues; it reads MTNKDESVKKNT. Residues 1-51 are disordered; sequence MTNKDESVKKNTESTVEETNVKQNIDDSVEQAEESKGHLQDEAIEETSDEN. A compositionally biased stretch (polar residues) spans 13-23; the sequence is ESTVEETNVKQ. The segment covering 42 to 51 has biased composition (acidic residues); that stretch reads EAIEETSDEN.

Belongs to the GrpE family. In terms of assembly, homodimer.

Its subcellular location is the cytoplasm. Its function is as follows. Participates actively in the response to hyperosmotic and heat shock by preventing the aggregation of stress-denatured proteins, in association with DnaK and GrpE. It is the nucleotide exchange factor for DnaK and may function as a thermosensor. Unfolded proteins bind initially to DnaJ; upon interaction with the DnaJ-bound protein, DnaK hydrolyzes its bound ATP, resulting in the formation of a stable complex. GrpE releases ADP from DnaK; ATP binding to DnaK triggers the release of the substrate protein, thus completing the reaction cycle. Several rounds of ATP-dependent interactions between DnaJ, DnaK and GrpE are required for fully efficient folding. This is Protein GrpE from Staphylococcus aureus (strain COL).